A 624-amino-acid chain; its full sequence is Protein NRT1/ PTR FAMILY 6.1 (624 aa).

The segment at 1-20 is disordered; it reads MVASEIKSPVSVPETPGSSS. 2 helical membrane passes run 83–100 and 114–134; these read MAYF…FYVM and FLGI…AYLG. T138 carries the post-translational modification Phosphothreonine. Transmembrane regions (helical) follow at residues 139–159, 184–204, 230–250, 258–278, 378–398, 422–442, 459–479, 504–524, 537–557, and 585–605; these read IAIF…GASL, SWQM…AAGI, FFNF…TLVV, WGMA…LFFA, LIPI…YLTL, VFPG…FVPI, VGIG…FENY, WLLI…VGLL, SIGS…ATIL, and CLYW…LWSA.

It belongs to the major facilitator superfamily. Proton-dependent oligopeptide transporter (POT/PTR) (TC 2.A.17) family. As to expression, expressed in flower and siliques.

The protein localises to the membrane. This Arabidopsis thaliana (Mouse-ear cress) protein is Protein NRT1/ PTR FAMILY 6.1 (NPF6.1).